Consider the following 226-residue polypeptide: Lysoplasmalogenase TMEM86B (226 aa).

Residues Met-1–Arg-23 lie on the Cytoplasmic side of the membrane. The helical transmembrane segment at Trp-24–Ile-40 threads the bilayer. Residues Pro-41–Ser-46 are Extracellular-facing. Residues Trp-47–Met-67 traverse the membrane as a helical segment. Topologically, residues Ser-68–Gln-75 are cytoplasmic. Residues Leu-76 to Trp-93 traverse the membrane as a helical segment. The Extracellular portion of the chain corresponds to Pro-94 to Gly-100. A helical transmembrane segment spans residues Met-101–Phe-117. The Cytoplasmic portion of the chain corresponds to Ser-118 to Gly-123. Residues Leu-124 to Leu-140 traverse the membrane as a helical segment. The Extracellular segment spans residues Gln-141–Asp-146. Residues Met-147–Trp-163 form a helical membrane-spanning segment. The Cytoplasmic portion of the chain corresponds to Arg-164–Ser-171. The helical transmembrane segment at Ala-172–Trp-188 threads the bilayer. Topologically, residues Asp-189–His-199 are extracellular. Residues Leu-200–Leu-218 traverse the membrane as a helical segment. Topologically, residues Arg-219–Asp-226 are cytoplasmic.

This sequence belongs to the TMEM86 family. Homodimer.

The protein localises to the endoplasmic reticulum membrane. Its subcellular location is the cytoplasm. It catalyses the reaction a 1-O-(1Z-alkenyl)-sn-glycero-3-phosphocholine + H2O = a 2,3-saturated aldehyde + sn-glycerol 3-phosphocholine. It carries out the reaction a 1-O-(1Z-alkenyl)-sn-glycero-3-phosphoethanolamine + H2O = a 2,3-saturated aldehyde + sn-glycero-3-phosphoethanolamine. Its activity is regulated as follows. Competitively inhibited by lysophosphatidic acid. Its function is as follows. Catalyzes the hydrolysis of the vinyl ether bond of choline or ethanolamine lysoplasmalogens, forming fatty aldehyde and glycerophosphocholine or glycerophosphoethanolamine, respectively and is specific for the sn-2-deacylated (lyso) form of plasmalogen. The sequence is that of Lysoplasmalogenase TMEM86B (TMEM86B) from Homo sapiens (Human).